The chain runs to 62 residues: UPF0434 protein Tola_2233 (62 aa).

This sequence belongs to the UPF0434 family.

The polypeptide is UPF0434 protein Tola_2233 (Tolumonas auensis (strain DSM 9187 / NBRC 110442 / TA 4)).